The following is a 156-amino-acid chain: MNINFTLISQAMAFAIFIWFTVRFVWPPLMRAIENRQKTIAEGLAAGERGKRELELASQRSGDVVREAKQRASDIIAQAEKRAAEIVDEAKVAAREEGDRILVGAKAEVEQEVFRAKEVLRQQVAGLALAGAAKILRREVDEKAHAELLASLKAEL.

The helical transmembrane segment at 5-27 threads the bilayer; the sequence is FTLISQAMAFAIFIWFTVRFVWP.

Belongs to the ATPase B chain family. In terms of assembly, F-type ATPases have 2 components, F(1) - the catalytic core - and F(0) - the membrane proton channel. F(1) has five subunits: alpha(3), beta(3), gamma(1), delta(1), epsilon(1). F(0) has three main subunits: a(1), b(2) and c(10-14). The alpha and beta chains form an alternating ring which encloses part of the gamma chain. F(1) is attached to F(0) by a central stalk formed by the gamma and epsilon chains, while a peripheral stalk is formed by the delta and b chains.

It localises to the cell inner membrane. F(1)F(0) ATP synthase produces ATP from ADP in the presence of a proton or sodium gradient. F-type ATPases consist of two structural domains, F(1) containing the extramembraneous catalytic core and F(0) containing the membrane proton channel, linked together by a central stalk and a peripheral stalk. During catalysis, ATP synthesis in the catalytic domain of F(1) is coupled via a rotary mechanism of the central stalk subunits to proton translocation. Functionally, component of the F(0) channel, it forms part of the peripheral stalk, linking F(1) to F(0). This is ATP synthase subunit b 1 from Nitrosospira multiformis (strain ATCC 25196 / NCIMB 11849 / C 71).